A 684-amino-acid chain; its full sequence is Homoaconitase, mitochondrial (684 aa).

Residues Cys-337, Cys-397, and Cys-400 each coordinate [4Fe-4S] cluster.

The protein belongs to the aconitase/IPM isomerase family. It depends on [4Fe-4S] cluster as a cofactor.

Its subcellular location is the mitochondrion. It carries out the reaction (2R,3S)-homoisocitrate = cis-homoaconitate + H2O. It participates in amino-acid biosynthesis; L-lysine biosynthesis via AAA pathway; L-alpha-aminoadipate from 2-oxoglutarate: step 3/5. Catalyzes the reversible hydration of cis-homoaconitate to (2R,3S)-homoisocitrate, a step in the alpha-aminoadipate pathway for lysine biosynthesis. This is Homoaconitase, mitochondrial (LYS4) from Candida albicans (strain SC5314 / ATCC MYA-2876) (Yeast).